A 328-amino-acid polypeptide reads, in one-letter code: 3,4-dihydroxyphenylacetaldehyde synthase 2 (328 aa).

N111 is an active-site residue. N6-(pyridoxal phosphate)lysine is present on K222.

This sequence belongs to the group II decarboxylase family. Pyridoxal 5'-phosphate is required as a cofactor.

The catalysed reaction is L-dopa + O2 + H2O + H(+) = 3,4-dihydroxyphenylacetaldehyde + H2O2 + NH4(+) + CO2. Catalyzes the decarboxylation-oxidative deamination of L-3,4-dihydroxyphenylalanine (L-DOPA) to 3,4-dihydroxylphenylacetaldehyde (DHPAA). Involved in cuticle development. Probably responsible for the protein cross-linking during the development of flexible cuticles. The sequence is that of 3,4-dihydroxyphenylacetaldehyde synthase 2 (amd) from Drosophila simulans (Fruit fly).